A 303-amino-acid polypeptide reads, in one-letter code: UDP-3-O-acyl-N-acetylglucosamine deacetylase (303 aa).

3 residues coordinate Zn(2+): histidine 78, histidine 237, and aspartate 241. Histidine 264 functions as the Proton donor in the catalytic mechanism.

The protein belongs to the LpxC family. It depends on Zn(2+) as a cofactor.

It catalyses the reaction a UDP-3-O-[(3R)-3-hydroxyacyl]-N-acetyl-alpha-D-glucosamine + H2O = a UDP-3-O-[(3R)-3-hydroxyacyl]-alpha-D-glucosamine + acetate. It participates in glycolipid biosynthesis; lipid IV(A) biosynthesis; lipid IV(A) from (3R)-3-hydroxytetradecanoyl-[acyl-carrier-protein] and UDP-N-acetyl-alpha-D-glucosamine: step 2/6. Functionally, catalyzes the hydrolysis of UDP-3-O-myristoyl-N-acetylglucosamine to form UDP-3-O-myristoylglucosamine and acetate, the committed step in lipid A biosynthesis. The sequence is that of UDP-3-O-acyl-N-acetylglucosamine deacetylase from Pseudomonas putida (strain GB-1).